We begin with the raw amino-acid sequence, 364 residues long: MGSASGSAERTQMGEDEACSFAMTITSGSVPPMVLKAVIELDVLEIIKRAGPGAHLSPAEIAAQLPTTNPGAAAMLDRMLRLLASYDVLSYSLHTLPDGRVERLYGLAPVCQFLTNNEDGVTLSALSLMNQDKVLMESWYHLKDAVLDGGIPFNKAYGMTAFEYHGTDPRFNKVFNNGMSNHSTITMKKLLENYKGFEGVSTLVDVGGGTGATLNMIISKHPTIKGINFDLPHVIEDAPTYPGVEHIGGDMFVSVPKGDAIFMKWICHDWSDEHCLRFLKNCYAALADHGKVIVCEYILPVAPETNHAARTVFHVDAIMLAHNPGGKERTEQEFESLAKGAGFEGFRVACSAYGTKVMEFLKKN.

Positions 183, 207, 230, 250, and 264 each coordinate S-adenosyl-L-homocysteine. Residue Asp230 coordinates S-adenosyl-L-methionine. Catalysis depends on His268, which acts as the Proton acceptor.

Belongs to the class I-like SAM-binding methyltransferase superfamily. Cation-independent O-methyltransferase family. In terms of assembly, homodimer.

It catalyses the reaction dopamine + S-adenosyl-L-methionine = 3-methoxytyramine + S-adenosyl-L-homocysteine + H(+). The enzyme catalyses 3,4-dihydroxy-5-methoxyphenethylamine + S-adenosyl-L-methionine = 4-hydroxy-3,5-dimethoxyphenethylamine + S-adenosyl-L-homocysteine + H(+). It functions in the pathway aromatic compound metabolism. The protein operates within alkaloid biosynthesis. Functionally, O-methyltransferase participating in the biosynthesis of natural products derived from phenylethylamine, including mescaline, a natural hallucinogen potentially used in psychotherapeutic treatments. Catalyzes the O-methylation of mescaline meta hydroxyl groups, using dopamine and 3,4-dihydroxy-5-methoxyphenethylamine as substrates. This Lophophora williamsii (Peyote) protein is O-methyltransferase 1.